Reading from the N-terminus, the 489-residue chain is MARGDGHLWTETYDSSTVAFMILGAALVFFMVPGLGFLYSGLARRKSALALIWVVIMATLVGILQWYFWGYSLAFSKTATNNKFIGNLDSFGFRNVYGKISDDSTYPELIYAIFQMMFMCVALSIIAGATAERGKLFPHMVFLFVFATLVYCPITYWIWAPGGWAYQWGVLDWAGGGNIEILSAVAGFVYSYFLGRRKENLLINFRPHNVSMVTLGTSILWFGWLLFNAASSLSPNMRSVYAFMNTCLSATTGGMTWCLLDYRSEKKWSTVGLCSGIICGLVAATPSSGCITLYGSLIQGIIAGVVCNFATKIKYYLKVDDSLDLLAEHGIAGVVGLIFNALFAADWVIGMDGTTKHKGGWLTHNWKQMYIQIAYIGASAGYCAVVTAIICFVLGKIPGVHLRVTEEAEALGLDEDQIGEFAYDYVEVRRDYYQWGVDTDALHTTCNGANSASETNPTEDSQNSSLSSATVSGQNEKSNNPKLHHAKEA.

Topologically, residues 1 to 17 (MARGDGHLWTETYDSST) are extracellular. Residues 18 to 38 (VAFMILGAALVFFMVPGLGFL) traverse the membrane as a helical segment. At 39-48 (YSGLARRKSA) the chain is on the cytoplasmic side. Residues 49 to 69 (LALIWVVIMATLVGILQWYFW) traverse the membrane as a helical segment. Residues 70 to 108 (GYSLAFSKTATNNKFIGNLDSFGFRNVYGKISDDSTYPE) lie on the Extracellular side of the membrane. The helical transmembrane segment at 109–129 (LIYAIFQMMFMCVALSIIAGA) threads the bilayer. Residues 130–139 (TAERGKLFPH) are Cytoplasmic-facing. A helical transmembrane segment spans residues 140-160 (MVFLFVFATLVYCPITYWIWA). Over 161–173 (PGGWAYQWGVLDW) the chain is Extracellular. A helical transmembrane segment spans residues 174–194 (AGGGNIEILSAVAGFVYSYFL). Topologically, residues 195–209 (GRRKENLLINFRPHN) are cytoplasmic. The helical transmembrane segment at 210–230 (VSMVTLGTSILWFGWLLFNAA) threads the bilayer. Topologically, residues 231-239 (SSLSPNMRS) are extracellular. A helical transmembrane segment spans residues 240 to 260 (VYAFMNTCLSATTGGMTWCLL). The Cytoplasmic portion of the chain corresponds to 261 to 267 (DYRSEKK). A helical transmembrane segment spans residues 268-288 (WSTVGLCSGIICGLVAATPSS). Residue Gly-289 is a topological domain, extracellular. Residues 290–310 (CITLYGSLIQGIIAGVVCNFA) form a helical membrane-spanning segment. Over 311–330 (TKIKYYLKVDDSLDLLAEHG) the chain is Cytoplasmic. A helical membrane pass occupies residues 331 to 351 (IAGVVGLIFNALFAADWVIGM). The Extracellular segment spans residues 352–372 (DGTTKHKGGWLTHNWKQMYIQ). The chain crosses the membrane as a helical span at residues 373–393 (IAYIGASAGYCAVVTAIICFV). At 394–489 (LGKIPGVHLR…NPKLHHAKEA (96 aa)) the chain is on the cytoplasmic side. Polar residues predominate over residues 448-481 (GANSASETNPTEDSQNSSLSSATVSGQNEKSNNP). The interval 448–489 (GANSASETNPTEDSQNSSLSSATVSGQNEKSNNPKLHHAKEA) is disordered.

Belongs to the ammonia transporter channel (TC 1.A.11.2) family.

The protein resides in the membrane. Its function is as follows. Transporter for ammonium (both charged and uncharged NH3 and NH4) to use as a nitrogen source. The affinity of MEP2 is about twenty times higher than that of MEP1. MEP3 has the lowest affinity. This chain is Ammonium transporter MEP3 (MEP3), found in Saccharomyces cerevisiae (strain ATCC 204508 / S288c) (Baker's yeast).